Consider the following 396-residue polypeptide: Elongation factor Tu (396 aa).

The 197-residue stretch at 10 to 206 (KPHVNVGTIG…ALDSYIPTPE (197 aa)) folds into the tr-type G domain. Residues 19-26 (GHVDHGKT) are G1. 19-26 (GHVDHGKT) lines the GTP pocket. Position 26 (threonine 26) interacts with Mg(2+). The tract at residues 60 to 64 (GITIN) is G2. Residues 81–84 (DCPG) are G3. GTP-binding positions include 81 to 85 (DCPGH) and 136 to 139 (NKCD). The interval 136–139 (NKCD) is G4. Residues 174–176 (SAK) are G5.

Belongs to the TRAFAC class translation factor GTPase superfamily. Classic translation factor GTPase family. EF-Tu/EF-1A subfamily. As to quaternary structure, monomer.

It localises to the cytoplasm. It catalyses the reaction GTP + H2O = GDP + phosphate + H(+). GTP hydrolase that promotes the GTP-dependent binding of aminoacyl-tRNA to the A-site of ribosomes during protein biosynthesis. This is Elongation factor Tu from Methylibium petroleiphilum (strain ATCC BAA-1232 / LMG 22953 / PM1).